The primary structure comprises 215 residues: Ribosomal RNA small subunit methyltransferase G (215 aa).

S-adenosyl-L-methionine contacts are provided by residues Gly-82, Met-87, 133 to 134, and Arg-148; that span reads VE.

It belongs to the methyltransferase superfamily. RNA methyltransferase RsmG family.

Its subcellular location is the cytoplasm. It carries out the reaction guanosine(527) in 16S rRNA + S-adenosyl-L-methionine = N(7)-methylguanosine(527) in 16S rRNA + S-adenosyl-L-homocysteine. In terms of biological role, specifically methylates the N7 position of guanine in position 527 of 16S rRNA. This Stutzerimonas stutzeri (strain A1501) (Pseudomonas stutzeri) protein is Ribosomal RNA small subunit methyltransferase G.